The following is a 447-amino-acid chain: Phosphoglucosamine mutase (447 aa).

The active-site Phosphoserine intermediate is Ser-102. The Mg(2+) site is built by Ser-102, Asp-241, Asp-243, and Asp-245. A Phosphoserine modification is found at Ser-102.

The protein belongs to the phosphohexose mutase family. Mg(2+) serves as cofactor. In terms of processing, activated by phosphorylation.

The enzyme catalyses alpha-D-glucosamine 1-phosphate = D-glucosamine 6-phosphate. Its function is as follows. Catalyzes the conversion of glucosamine-6-phosphate to glucosamine-1-phosphate. In Symbiobacterium thermophilum (strain DSM 24528 / JCM 14929 / IAM 14863 / T), this protein is Phosphoglucosamine mutase.